The chain runs to 337 residues: Ferredoxin--NADP reductase (337 aa).

Positions 35, 43, 48, 88, 122, 289, and 330 each coordinate FAD.

Belongs to the ferredoxin--NADP reductase type 2 family. In terms of assembly, homodimer. It depends on FAD as a cofactor.

The enzyme catalyses 2 reduced [2Fe-2S]-[ferredoxin] + NADP(+) + H(+) = 2 oxidized [2Fe-2S]-[ferredoxin] + NADPH. The sequence is that of Ferredoxin--NADP reductase from Ehrlichia ruminantium (strain Gardel).